The chain runs to 398 residues: Phosphoglycerate kinase (398 aa).

Residues 21–23 (DFN), Arg41, 64–67 (HLGR), Arg123, and Arg156 each bind substrate. ATP is bound by residues Lys207, Gly294, Glu325, and 354–357 (GGDS).

This sequence belongs to the phosphoglycerate kinase family. In terms of assembly, monomer.

It localises to the cytoplasm. The enzyme catalyses (2R)-3-phosphoglycerate + ATP = (2R)-3-phospho-glyceroyl phosphate + ADP. It functions in the pathway carbohydrate degradation; glycolysis; pyruvate from D-glyceraldehyde 3-phosphate: step 2/5. The polypeptide is Phosphoglycerate kinase (Salinibacter ruber (strain DSM 13855 / M31)).